The chain runs to 480 residues: Islet cell autoantigen 1 (480 aa).

In terms of domain architecture, AH spans 50 to 253 (ASDADLDAKL…TSHTMAAIHE (204 aa)). Composition is skewed to basic and acidic residues over residues 276 to 293 (LVEK…REAV) and 306 to 321 (ENQH…EEGK). Disordered regions lie at residues 276–338 (LVEK…ACSG) and 400–421 (LKEP…IGSA).

It localises to the cytoplasm. The protein resides in the cytosol. The protein localises to the golgi apparatus membrane. Its subcellular location is the cytoplasmic vesicle. It is found in the secretory vesicle membrane. It localises to the secretory vesicle. The protein resides in the synaptic vesicle membrane. May play a role in neurotransmitter secretion. The protein is Islet cell autoantigen 1 of Rattus norvegicus (Rat).